A 256-amino-acid chain; its full sequence is Indole-3-glycerol phosphate synthase (256 aa).

The protein belongs to the TrpC family.

The catalysed reaction is 1-(2-carboxyphenylamino)-1-deoxy-D-ribulose 5-phosphate + H(+) = (1S,2R)-1-C-(indol-3-yl)glycerol 3-phosphate + CO2 + H2O. It functions in the pathway amino-acid biosynthesis; L-tryptophan biosynthesis; L-tryptophan from chorismate: step 4/5. This chain is Indole-3-glycerol phosphate synthase, found in Chlorobaculum tepidum (strain ATCC 49652 / DSM 12025 / NBRC 103806 / TLS) (Chlorobium tepidum).